Consider the following 289-residue polypeptide: Elongation factor Ts (289 aa).

The segment at 82–85 is involved in Mg(2+) ion dislocation from EF-Tu; the sequence is TDFV.

It belongs to the EF-Ts family.

Its subcellular location is the cytoplasm. In terms of biological role, associates with the EF-Tu.GDP complex and induces the exchange of GDP to GTP. It remains bound to the aminoacyl-tRNA.EF-Tu.GTP complex up to the GTP hydrolysis stage on the ribosome. In Chloroherpeton thalassium (strain ATCC 35110 / GB-78), this protein is Elongation factor Ts.